The following is a 136-amino-acid chain: 5-hydroxyisourate hydrolase (136 aa).

Positions 1–20 are cleaved as a signal peptide; the sequence is MKRYILATAIASLVAAPAMA. Positions 31, 69, and 133 each coordinate substrate.

The protein belongs to the transthyretin family. 5-hydroxyisourate hydrolase subfamily. Homotetramer.

Its subcellular location is the periplasm. It catalyses the reaction 5-hydroxyisourate + H2O = 5-hydroxy-2-oxo-4-ureido-2,5-dihydro-1H-imidazole-5-carboxylate + H(+). Functionally, catalyzes the hydrolysis of 5-hydroxyisourate (HIU) to 2-oxo-4-hydroxy-4-carboxy-5-ureidoimidazoline (OHCU). This Salmonella typhi protein is 5-hydroxyisourate hydrolase (hiuH).